Consider the following 137-residue polypeptide: Succinate dehydrogenase cytochrome b560 subunit (137 aa).

2 helical membrane passes run 31–51 and 60–80; these read AFLA…DLSL and FFFL…FTLL. His-85 serves as a coordination point for heme. A helical transmembrane segment spans residues 106 to 126; it reads VYTSGIIMLFCAAFLALLNII.

The protein belongs to the cytochrome b560 family. As to quaternary structure, forms part of complex II containing four subunits: a 70 kDa flavoprotein (FP), a 27 kDa iron-sulfur protein (IP), a cytochrome B and a membrane-anchoring protein. The cofactor is heme.

The protein resides in the mitochondrion inner membrane. It participates in carbohydrate metabolism; tricarboxylic acid cycle. Membrane-anchoring subunit of succinate dehydrogenase (SDH) that is involved in complex II of the mitochondrial electron transport chain and is responsible for transferring electrons from succinate to ubiquinone (coenzyme Q). The protein is Succinate dehydrogenase cytochrome b560 subunit (SDH3) of Marchantia polymorpha (Common liverwort).